The sequence spans 167 residues: NADH-ubiquinone oxidoreductase chain 6 (167 aa).

The next 5 membrane-spanning stretches (helical) occupy residues 1-21, 23-43, 47-67, 86-106, and 133-153; these read MVLM…VASN, SPYF…GMLM, MTFL…VVFA, VFSY…AFVG, and AGGY…LVVL.

It belongs to the complex I subunit 6 family.

It is found in the mitochondrion membrane. It catalyses the reaction a ubiquinone + NADH + 5 H(+)(in) = a ubiquinol + NAD(+) + 4 H(+)(out). Functionally, core subunit of the mitochondrial membrane respiratory chain NADH dehydrogenase (Complex I) that is believed to belong to the minimal assembly required for catalysis. Complex I functions in the transfer of electrons from NADH to the respiratory chain. The immediate electron acceptor for the enzyme is believed to be ubiquinone. The polypeptide is NADH-ubiquinone oxidoreductase chain 6 (MT-ND6) (Polypterus ornatipinnis (Ornate bichir)).